The following is a 154-amino-acid chain: MGLSDGEWQLVLKVWGKVEGDLPGHGQEVLIRLFKTHPETLEKFDKFKGLKTEDEMKASADLKKHGGTVLTALGNILKKKGQHEAELKPLAQSHATKHKISIKFLEYISEAIIHVLQSKHSADFGADAQAAMGKALELFRNDMAAKYKEFGFQG.

One can recognise a Globin domain in the interval 2-148 (GLSDGEWQLV…FRNDMAAKYK (147 aa)). Ser-4 carries the post-translational modification Phosphoserine. His-65 provides a ligand contact to nitrite. His-65 is a binding site for O2. The residue at position 68 (Thr-68) is a Phosphothreonine. His-94 is a binding site for heme b.

Belongs to the globin family. As to quaternary structure, monomeric.

The protein localises to the cytoplasm. The protein resides in the sarcoplasm. It carries out the reaction Fe(III)-heme b-[protein] + nitric oxide + H2O = Fe(II)-heme b-[protein] + nitrite + 2 H(+). The enzyme catalyses H2O2 + AH2 = A + 2 H2O. Functionally, monomeric heme protein which primary function is to store oxygen and facilitate its diffusion within muscle tissues. Reversibly binds oxygen through a pentacoordinated heme iron and enables its timely and efficient release as needed during periods of heightened demand. Depending on the oxidative conditions of tissues and cells, and in addition to its ability to bind oxygen, it also has a nitrite reductase activity whereby it regulates the production of bioactive nitric oxide. Under stress conditions, like hypoxia and anoxia, it also protects cells against reactive oxygen species thanks to its pseudoperoxidase activity. This Ornithorhynchus anatinus (Duckbill platypus) protein is Myoglobin (MB).